Here is a 122-residue protein sequence, read N- to C-terminus: Large ribosomal subunit protein uL14c (122 aa).

The protein belongs to the universal ribosomal protein uL14 family. In terms of assembly, part of the 50S ribosomal subunit.

Its subcellular location is the plastid. The protein localises to the chloroplast. Binds to 23S rRNA. The chain is Large ribosomal subunit protein uL14c (rpl14) from Bigelowiella natans (Pedinomonas minutissima).